The chain runs to 740 residues: ABC transporter G family member 1 (740 aa).

Residues 82–334 (LDFRNLFPRR…FTEFGSPIPE (253 aa)) form the ABC transporter domain. 127–134 (GASGSGKS) lines the ATP pocket. Positions 434–644 (IEIKTLSKRS…PYEAVLQNEF (211 aa)) constitute an ABC transmembrane type-2 domain. The next 6 membrane-spanning stretches (helical) occupy residues 453 to 473 (LFGI…TVFW), 488 to 508 (FFAF…PVFL), 529 to 549 (VLSH…AFAA), 563 to 585 (GLLF…VTFL), 594 to 614 (LGYT…GFFI), and 713 to 733 (LFIT…TLLL).

The protein belongs to the ABC transporter superfamily. ABCG family. Eye pigment precursor importer (TC 3.A.1.204) subfamily.

The protein localises to the membrane. In Arabidopsis thaliana (Mouse-ear cress), this protein is ABC transporter G family member 1 (ABCG1).